We begin with the raw amino-acid sequence, 120 residues long: Ribonuclease P protein component (120 aa).

This sequence belongs to the RnpA family. As to quaternary structure, consists of a catalytic RNA component (M1 or rnpB) and a protein subunit.

It carries out the reaction Endonucleolytic cleavage of RNA, removing 5'-extranucleotides from tRNA precursor.. In terms of biological role, RNaseP catalyzes the removal of the 5'-leader sequence from pre-tRNA to produce the mature 5'-terminus. It can also cleave other RNA substrates such as 4.5S RNA. The protein component plays an auxiliary but essential role in vivo by binding to the 5'-leader sequence and broadening the substrate specificity of the ribozyme. The protein is Ribonuclease P protein component of Mycobacterium marinum (strain ATCC BAA-535 / M).